Consider the following 261-residue polypeptide: 6-carboxyhexanoate--CoA ligase (261 aa).

It belongs to the BioW family. Homodimer. It depends on Mg(2+) as a cofactor.

The catalysed reaction is heptanedioate + ATP + CoA = 6-carboxyhexanoyl-CoA + AMP + diphosphate. Its pathway is metabolic intermediate metabolism; pimeloyl-CoA biosynthesis; pimeloyl-CoA from pimelate: step 1/1. Functionally, catalyzes the transformation of pimelate into pimeloyl-CoA with concomitant hydrolysis of ATP to AMP. The protein is 6-carboxyhexanoate--CoA ligase of Bacillus licheniformis (strain ATCC 14580 / DSM 13 / JCM 2505 / CCUG 7422 / NBRC 12200 / NCIMB 9375 / NCTC 10341 / NRRL NRS-1264 / Gibson 46).